The chain runs to 1318 residues: Uromodulin-like 1 (1318 aa).

Residues 1 to 21 (MLRTSGLALLALVSAVGPSQA) form the signal peptide. The Extracellular segment spans residues 22–1272 (SGFTEKGLSL…HAEAGLGAGY (1251 aa)). Residues 33–106 (GYQLCSHRVT…YEQLGLYCVL (74 aa)) enclose the EMI domain. Intrachain disulfides connect cysteine 37/cysteine 94, cysteine 61/cysteine 70, and cysteine 93/cysteine 104. N-linked (GlcNAc...) asparagine glycosylation is present at asparagine 89. Asparagine 109 carries N-linked (GlcNAc...) asparagine glycosylation. The WAP domain maps to 114 to 158 (FTSRPGACPAEGPEPSTSPCSLDIDCPGLEKCCPWSGGRYCMAPA). Asparagine 172 carries an N-linked (GlcNAc...) asparagine glycan. The region spanning 264-313 (DVNECFYEELNACSGRELCANLEGSYWCVCHQEAPATSPRKLNLEWEDCP) is the EGF-like 1; calcium-binding domain. Residues 314–398 (PVSDYVVLNV…TTLTIKTNAQ (85 aa)) form the Fibronectin type-III 1 domain. Residues asparagine 322, asparagine 335, and asparagine 417 are each glycosylated (N-linked (GlcNAc...) asparagine). Residues 396–510 (NAQVFEVTIK…QGTRVQDWDE (115 aa)) form the SEA 1 domain. The EGF-like 2; calcium-binding domain maps to 507 to 552 (DWDECVDSAEHDCSPAAWCINLEGSYTCQCRTTRDATPSRAGRACE). 3 cysteine pairs are disulfide-bonded: cysteine 511–cysteine 525, cysteine 519–cysteine 534, and cysteine 536–cysteine 551. An N-linked (GlcNAc...) asparagine glycan is attached at asparagine 585. The interval 593–655 (GYPQGTPAAG…PSPTEDPTGH (63 aa)) is disordered. Residues 702 to 791 (VPVSIGRIMV…HLKVRTAARK (90 aa)) form the Fibronectin type-III 2 domain. Asparagine 713 is a glycosylation site (N-linked (GlcNAc...) asparagine). In terms of domain architecture, SEA 2 spans 788 to 900 (AARKLIGKVR…GDTFIQDYDE (113 aa)). Positions 897-938 (DYDECERKEDDCVPGTSCRNTLGSFTCSCEGGAPDFPVEYSE) constitute an EGF-like 3; calcium-binding domain. 2 disulfide bridges follow: cysteine 901-cysteine 914 and cysteine 908-cysteine 923. A disordered region spans residues 938-957 (ERPCEGDSPGNETWATSPER). Residues asparagine 984 and asparagine 1050 are each glycosylated (N-linked (GlcNAc...) asparagine). The region spanning 992–1235 (LCEIEKVVVA…ATCKINCNNF (244 aa)) is the ZP domain. An intrachain disulfide couples cysteine 1157 to cysteine 1215. The chain crosses the membrane as a helical span at residues 1273–1293 (VVLIVVAIFVLVAGTATLLIV). Over 1294–1318 (RYQRMNGRYNFKIQSNNFSYQVFYE) the chain is Cytoplasmic.

As to expression, isoform 4 is expressed at low level in kidney, testis and fetal thymus. Isoform 3 is expressed at low level in prostate, testis and fetal thymus.

It is found in the cell membrane. Its subcellular location is the cytoplasm. This Homo sapiens (Human) protein is Uromodulin-like 1 (UMODL1).